The following is an 800-amino-acid chain: Phenylalanine--tRNA ligase beta subunit (800 aa).

Positions 39 to 152 (AAGLSKIVVG…EDAVPGEEVF (114 aa)) constitute a tRNA-binding domain. A B5 domain is found at 405-480 (TSDVEVSSTL…RIYGYDRLPT (76 aa)). Mg(2+)-binding residues include Asp-458, Asp-464, Glu-467, and Glu-468. One can recognise an FDX-ACB domain in the interval 707-800 (TKFPAVSRDV…LEEKVNAEVR (94 aa)).

Belongs to the phenylalanyl-tRNA synthetase beta subunit family. Type 1 subfamily. In terms of assembly, tetramer of two alpha and two beta subunits. Mg(2+) serves as cofactor.

It is found in the cytoplasm. It carries out the reaction tRNA(Phe) + L-phenylalanine + ATP = L-phenylalanyl-tRNA(Phe) + AMP + diphosphate + H(+). In Streptococcus pneumoniae (strain ATCC BAA-255 / R6), this protein is Phenylalanine--tRNA ligase beta subunit.